Reading from the N-terminus, the 368-residue chain is Putative potassium channel KAT5 (368 aa).

3 helical membrane passes run 33 to 53, 97 to 117, and 132 to 152; these read WWHM…PFEL, LLNL…ARVE, and LLCV…WMVF. The segment at residues 180–199 is an intramembrane region (pore-forming); the sequence is CAVYWSITTLATVGYGDLHA. A helical transmembrane segment spans residues 206-226; that stretch reads LFSIAFMLFNMGLTSYIIGNI. An a nucleoside 3',5'-cyclic phosphate-binding site is contributed by 225 to 344; the sequence is NITNLVVRET…CIVFSNFILV (120 aa).

It belongs to the potassium channel family. Plant (TC 1.A.1.4) subfamily.

Its subcellular location is the membrane. Functionally, putative inward-rectifying potassium channel. The polypeptide is Putative potassium channel KAT5 (Oryza sativa subsp. japonica (Rice)).